Reading from the N-terminus, the 1337-residue chain is Protein HEG homolog 1 (1337 aa).

The first 31 residues, 1–31 (MATPRAPRWPPPSLLLLLLLPLLLLPPAAPG), serve as a signal peptide directing secretion. Composition is skewed to low complexity over residues 28-40 (AAPG…PSPA) and 54-66 (PGAG…PGVA). Disordered regions lie at residues 28-149 (AAPG…SNMA), 175-211 (SSLL…GFLE), 235-296 (ASHP…QNPS), 313-675 (VPRT…PSPI), 723-767 (LIPS…TVSL), and 860-909 (EGNR…PQTT). Residues 32-1204 (ARGSLPSPAH…GLNCGNPYQL (1173 aa)) lie on the Extracellular side of the membrane. Residues 118–131 (TAQNARMSHSSSEG) are compositionally biased toward polar residues. Low complexity predominate over residues 175-190 (SSLLSLESLPESPSSS). 4 stretches are compositionally biased toward polar residues: residues 195 to 206 (RITPSQTESGTS), 247 to 258 (VLSQKRNSSGQE), 283 to 296 (IKNG…QNPS), and 340 to 361 (GITS…NSGL). The segment covering 470-480 (RGGGEDSGMGG) has biased composition (gly residues). Low complexity-rich tracts occupy residues 486–502 (SSSS…LDSS) and 556–575 (SYSE…DSPS). Polar residues-rich tracts occupy residues 576-585 (QAQPKQSSMS) and 592-617 (AQSS…NMPN). The segment covering 637-675 (PSTQPSPSQPQPFSSALPSTRSPGSTSETTTSSPSPSPI) has biased composition (low complexity). Polar residues-rich tracts occupy residues 725-742 (PSNQ…QQEK) and 751-763 (SLVS…TKAV). A compositionally biased stretch (low complexity) spans 868–884 (PTTQPIPLTTSTTSAGE). The segment covering 885–896 (RTTELGRAEESS) has biased composition (basic and acidic residues). The span at 897–909 (PSHFLTPSSPQTT) shows a compositional bias: polar residues. An EGF-like 1 domain is found at 941-979 (PVNSCTVNPCLHDGKCIVDLTGRGYRCVCPPAWQGENCS). Cystine bridges form between Cys-945/Cys-956, Cys-950/Cys-967, Cys-969/Cys-978, Cys-985/Cys-996, Cys-990/Cys-1005, and Cys-1007/Cys-1018. An EGF-like 2; calcium-binding domain is found at 981–1019 (DVNECLSSPCPPLATCNNTQGSFTCRCPVGYQLEKGICN). Asn-1093 is a glycosylation site (N-linked (GlcNAc...) asparagine). Residues 1205–1225 (ITVVIAAAGGGLLLILGVALI) traverse the membrane as a helical segment. Residues 1226-1337 (VTCCRKSKND…SDESRRRDYF (112 aa)) lie on the Cytoplasmic side of the membrane. Phosphoserine is present on Ser-1315.

As to quaternary structure, interacts with CCM2 and KRIT1; KRIT1 markedly facilitates interaction with CCM2.

Its subcellular location is the cell membrane. The protein resides in the cell junction. Its function is as follows. Receptor component of the CCM signaling pathway which is a crucial regulator of heart and vessel formation and integrity. May be acting by stabilizing endothelial cell junctions. The sequence is that of Protein HEG homolog 1 (Heg1) from Mus musculus (Mouse).